The chain runs to 262 residues: 4-hydroxy-2-oxovalerate aldolase (262 aa).

His-48 functions as the Proton acceptor in the catalytic mechanism. Gln-149 is a substrate binding site. Glu-151 is a binding site for Mg(2+). Ala-176 and Asp-177 together coordinate substrate. Residue Asp-177 coordinates Mg(2+).

The protein belongs to the HpcH/HpaI aldolase family.

It carries out the reaction (S)-4-hydroxy-2-oxopentanoate = acetaldehyde + pyruvate. It functions in the pathway xenobiotic degradation; biphenyl degradation. Its function is as follows. Catalyzes the reversible retro-aldol cleavage of 4-hydroxy-2-oxovalerate to pyruvate and acetaldehyde. This Novosphingobium aromaticivorans (Sphingomonas aromaticivorans) protein is 4-hydroxy-2-oxovalerate aldolase (bphF).